The sequence spans 526 residues: Peptide chain release factor 3 (526 aa).

Residues 9 to 277 (DLRRTFAIIS…GLTKWAPKPL (269 aa)) enclose the tr-type G domain. GTP contacts are provided by residues 18-25 (SHPDAGKT), 86-90 (DTPGH), and 140-143 (NKMD).

Belongs to the TRAFAC class translation factor GTPase superfamily. Classic translation factor GTPase family. PrfC subfamily.

It is found in the cytoplasm. In terms of biological role, increases the formation of ribosomal termination complexes and stimulates activities of RF-1 and RF-2. It binds guanine nucleotides and has strong preference for UGA stop codons. It may interact directly with the ribosome. The stimulation of RF-1 and RF-2 is significantly reduced by GTP and GDP, but not by GMP. The sequence is that of Peptide chain release factor 3 from Colwellia psychrerythraea (strain 34H / ATCC BAA-681) (Vibrio psychroerythus).